The sequence spans 380 residues: Hydrogenase maturation factor HypD1 (380 aa).

Fe cation-binding residues include Cys-36, Cys-64, and Cys-67.

This sequence belongs to the HypD family. The cofactor is [4Fe-4S] cluster.

It participates in protein modification; [NiFe] hydrogenase maturation. Functionally, involved in the maturation of [NiFe] hydrogenases. Involved in the biosynthesis of the Fe(CN)(2)CO cofactor. This Bradyrhizobium diazoefficiens (strain JCM 10833 / BCRC 13528 / IAM 13628 / NBRC 14792 / USDA 110) protein is Hydrogenase maturation factor HypD1 (hypD1).